A 130-amino-acid chain; its full sequence is Astrocytic phosphoprotein PEA-15 (130 aa).

In terms of domain architecture, DED spans 3–81 (EYGTLLQDLT…RPDLLTMVVD (79 aa)). Residues serine 61 and serine 90 each carry the phosphoserine modification. The tract at residues 98–107 (KLTRIPSAKK) is microtubule-binding. At serine 104 the chain carries Phosphoserine; by PKC. Position 116 is a phosphoserine; by CaMK2 (serine 116). The tract at residues 122 to 129 (KLAPPPKK) is microtubule-binding.

Binds RPS6KA3, MAPK3 and MAPK1. Interacts with CASP8 and FADD. Transient interaction with PLD1 and PLD2. Post-translationally, phosphorylated by protein kinase C and calcium-calmodulin-dependent protein kinase. These phosphorylation events are modulated by neurotransmitters or hormones. Predominantly expressed in the brain. Low levels in some peripheral organs.

It is found in the cytoplasm. Its function is as follows. Blocks Ras-mediated inhibition of integrin activation and modulates the ERK MAP kinase cascade. Inhibits RPS6KA3 activities by retaining it in the cytoplasm. Inhibits both TNFRSF6- and TNFRSF1A-mediated CASP8 activity and apoptosis. Regulates glucose transport by controlling both the content of SLC2A1 glucose transporters on the plasma membrane and the insulin-dependent trafficking of SLC2A4 from the cell interior to the surface. In Mus musculus (Mouse), this protein is Astrocytic phosphoprotein PEA-15 (Pea15).